The chain runs to 20 residues: Beta-1,3-glucan-binding protein 2 (20 aa).

Belongs to the insect beta-1,3-glucan binding protein family. Monomer.

The protein localises to the secreted. Functionally, involved in the recognition of invading microorganisms causing their aggregation. Activates the phenoloxidase cascade. Binds specifically to beta-1,3-glucan. Binds the A.niger cell wall component alpha-1,3-glucan, a fungal pathogen-associated molecular pattern (PAMP) that activates the host immune response. This Galleria mellonella (Greater wax moth) protein is Beta-1,3-glucan-binding protein 2.